Reading from the N-terminus, the 475-residue chain is Squamosa promoter-binding-like protein 12 (475 aa).

The tract at residues Asn-49–Ser-73 is disordered. Over residues Gly-51–Ser-73 the composition is skewed to low complexity. The SBP-type zinc finger occupies Ser-177 to Pro-254. Zn(2+)-binding residues include Cys-180, Cys-185, Cys-202, His-205, Cys-221, Cys-224, His-228, and Cys-240. The short motif at Lys-237 to Lys-253 is the Bipartite nuclear localization signal element. Positions Gly-437–His-475 are disordered. Residues Asn-465–His-475 are compositionally biased toward polar residues.

In terms of tissue distribution, expressed in young panicles.

Its subcellular location is the nucleus. Its function is as follows. Trans-acting factor that binds specifically to the consensus nucleotide sequence 5'-TNCGTACAA-3'. May be involved in panicle development. The protein is Squamosa promoter-binding-like protein 12 (SPL12) of Oryza sativa subsp. indica (Rice).